The sequence spans 283 residues: Protein ATAF2 (283 aa).

Residues 7–159 enclose the NAC domain; the sequence is LPAGFRFHPT…DWVLCRIYNK (153 aa). A DNA-binding region spans residues 103–165; the sequence is LGIKKALVFY…IYNKKGTMEK (63 aa). The segment at 171–211 is disordered; that stretch reads EKPRTTTMAEQSSSPFDTSDSTYPTLQEDDSSSSGGHGHVV. Over residues 175 to 195 the composition is skewed to polar residues; sequence TTTMAEQSSSPFDTSDSTYPT.

As to quaternary structure, homodimer. Interacts with AHK2. Interacts with AHL12 and AHL27. Interacts with the helicase domain of the tobamovirus (TMV) replicase. In terms of tissue distribution, expressed in roots, cotyledons, rosette leaves, cauline leaves and mature flowers. Expressed at low levels in stems and flower buds.

The protein resides in the nucleus. Its function is as follows. Involved in disease resistance response. May function as repressor of pathogenesis-related proteins. May function in the regulation of host basal defense responses against viral infection. Transcriptional activator involved in responses to wounding and infection with tobamovirus (TMV). Binds to the DNA sequences 5'-AAAATATCT-3' and 5'AGATTTTT-3' of CYP734A1/BAS1 and CYP72C1/SOB7 promoters, respectively. Acts as a suppressor of the brassinosteroid (BR)-inactivating enzymes CYP734A1/BAS1 and CYP72C1/SOB7, and prevents their expression in almost all tissues. Plays a central role in integrating BR homeostasis and seedling development. Regulates the spatial regulation of BR homeostasis and participates in the regulation of hypocotyl elongation and root growth by suppressing BR catabolism. Mediates connection between BR catabolism and photomorphogenesis. Binds to, and transactivates the promoter of the auxin biosynthetic gene NIT2. Stress-responsive NAC transcription factor involved in ABA-inducible leaf senescence signaling. Required for normal seed development and morphology. This Arabidopsis thaliana (Mouse-ear cress) protein is Protein ATAF2 (NAC081).